We begin with the raw amino-acid sequence, 231 residues long: Orotidine 5'-phosphate decarboxylase (231 aa).

Substrate contacts are provided by residues Asp-11, Lys-34, 61-70, Thr-117, Arg-179, Gln-188, Gly-208, and Arg-209; that span reads DLKLHDIPNT. Lys-63 (proton donor) is an active-site residue.

The protein belongs to the OMP decarboxylase family. Type 1 subfamily. Homodimer.

It catalyses the reaction orotidine 5'-phosphate + H(+) = UMP + CO2. Its pathway is pyrimidine metabolism; UMP biosynthesis via de novo pathway; UMP from orotate: step 2/2. Functionally, catalyzes the decarboxylation of orotidine 5'-monophosphate (OMP) to uridine 5'-monophosphate (UMP). This Streptococcus thermophilus (strain CNRZ 1066) protein is Orotidine 5'-phosphate decarboxylase.